The chain runs to 243 residues: Probable transcriptional regulatory protein LGAS_1276 (243 aa).

The segment at 1–22 (MSGHSKWHNIQGRKNAQDAKRG) is disordered.

This sequence belongs to the TACO1 family.

The protein localises to the cytoplasm. The polypeptide is Probable transcriptional regulatory protein LGAS_1276 (Lactobacillus gasseri (strain ATCC 33323 / DSM 20243 / BCRC 14619 / CIP 102991 / JCM 1131 / KCTC 3163 / NCIMB 11718 / NCTC 13722 / AM63)).